A 256-amino-acid polypeptide reads, in one-letter code: Small ribosomal subunit protein eS1 (256 aa).

Residues 1–18 (MAVGKNKRLSKGKKGLKK) show a composition bias toward basic residues. A disordered region spans residues 1–22 (MAVGKNKRLSKGKKGLKKKTQD). N-acetylalanine; partial is present on A2.

Belongs to the eukaryotic ribosomal protein eS1 family. In terms of assembly, component of the small ribosomal subunit. Mature ribosomes consist of a small (40S) and a large (60S) subunit. The 40S subunit contains about 33 different proteins and 1 molecule of RNA (18S). The 60S subunit contains about 49 different proteins and 3 molecules of RNA (25S, 5.8S and 5S).

Its subcellular location is the cytoplasm. This chain is Small ribosomal subunit protein eS1, found in Pyricularia oryzae (strain Y34) (Rice blast fungus).